The primary structure comprises 642 residues: Threonine--tRNA ligase (642 aa).

Residues 1 to 63 (MSEIVVTLPD…TDDCELVIVT (63 aa)) enclose the TGS domain. The catalytic stretch occupies residues 242–533 (DHRKLGQELD…LIEHFDGNFP (292 aa)). Zn(2+)-binding residues include Cys334, His385, and His510.

The protein belongs to the class-II aminoacyl-tRNA synthetase family. As to quaternary structure, homodimer. Zn(2+) is required as a cofactor.

It is found in the cytoplasm. The catalysed reaction is tRNA(Thr) + L-threonine + ATP = L-threonyl-tRNA(Thr) + AMP + diphosphate + H(+). Its function is as follows. Catalyzes the attachment of threonine to tRNA(Thr) in a two-step reaction: L-threonine is first activated by ATP to form Thr-AMP and then transferred to the acceptor end of tRNA(Thr). The sequence is that of Threonine--tRNA ligase from Natronomonas pharaonis (strain ATCC 35678 / DSM 2160 / CIP 103997 / JCM 8858 / NBRC 14720 / NCIMB 2260 / Gabara) (Halobacterium pharaonis).